The sequence spans 192 residues: MGKTPEDFERHTMRSLIFVLALSVFTCSGFPVYDYELPVTEEALNASIARINSQTWGPNLYGVVRSHVRHVDMWNSNDYRLELQLSIRETECTKASGRDPFTCGFKVGPFVPTAVCKSVVEVSSEQIVNVIVRCHQSTFSSESMSSEEMTYMLMTDPRKRGSSRSEAFSSRGRGHSNGDWRKPDYTSPGKVE.

The signal sequence occupies residues 1-29 (MGKTPEDFERHTMRSLIFVLALSVFTCSG). Cystine bridges form between C92/C103 and C116/C134. Residues 155–192 (TDPRKRGSSRSEAFSSRGRGHSNGDWRKPDYTSPGKVE) form a disordered region.

Belongs to the SPP2 family. In terms of processing, multiply phosphorylated at serine residues.

The protein resides in the secreted. Its function is as follows. Could coordinate an aspect of bone turnover. This is Secreted phosphoprotein 24 (SPP2) from Gallus gallus (Chicken).